A 183-amino-acid chain; its full sequence is Ribosome rescue factor SmrB (183 aa).

Positions 98–173 (LDLHGLTQLQ…GDAALLVLIE (76 aa)) constitute a Smr domain.

This sequence belongs to the SmrB family. In terms of assembly, associates with collided ribosomes, but not with correctly translating polysomes.

Functionally, acts as a ribosome collision sensor. Detects stalled/collided disomes (pairs of ribosomes where the leading ribosome is stalled and a second ribosome has collided with it) and endonucleolytically cleaves mRNA at the 5' boundary of the stalled ribosome. Stalled/collided disomes form a new interface (primarily via the 30S subunits) that binds SmrB. Cleaved mRNA becomes available for tmRNA ligation, leading to ribosomal subunit dissociation and rescue of stalled ribosomes. The sequence is that of Ribosome rescue factor SmrB from Salmonella agona (strain SL483).